A 274-amino-acid chain; its full sequence is Outer surface protein A (274 aa).

The first 16 residues, 1 to 16 (MKKYLLGIGLILALIA), serve as a signal peptide directing secretion. The N-palmitoyl cysteine moiety is linked to residue C17. C17 is lipidated: S-diacylglycerol cysteine.

It belongs to the OspA lipoprotein family.

It localises to the cell outer membrane. The protein resides in the cell surface. The sequence is that of Outer surface protein A from Borreliella burgdorferi (Lyme disease spirochete).